The primary structure comprises 584 residues: ATP synthase subunit alpha, mitochondrial (584 aa).

The transit peptide at 1–24 (MRRFGSKFASGLASRCALACPLAS) directs the protein to the mitochondrion. ATP-binding positions include 207 to 214 (DRQTGKTS) and Gln-464.

Belongs to the ATPase alpha/beta chains family. In terms of assembly, F-type ATPases have 2 components, F(1) - the catalytic core - and F(o) - the membrane proton channel. F(1) has five subunits: alpha(3), beta(3), gamma(1), delta(1), epsilon(1), plus the additional subunit P18 (Tb427.05.1710) that is not present in F(1)F(o) ATP synthase from metazoa. Subunit P18 (Tb927.5.1710) interacts with the alpha subunit with a 1:1 stoichiometry; the interaction is direct. Subunit gamma is part of the central stalk. F(o) has three main subunits: a, b and c. The trypanosomal ATPase complex contains additional subunits that are not present in the F(1)F(o) ATP synthase from metazoa.

It localises to the mitochondrion. The protein localises to the mitochondrion inner membrane. Its function is as follows. Mitochondrial membrane ATP synthase (F(1)F(o) ATP synthase) produces ATP from ADP in the presence of a proton gradient across the membrane which is generated by electron transport complexes of the respiratory chain. F-type ATPases consist of two structural domains, F(1) - containing the extramembraneous catalytic core, and F(o) - containing the membrane proton channel, linked together by a central stalk and a peripheral stalk. During catalysis, ATP synthesis in the catalytic domain of F(1) is coupled via a rotary mechanism of the central stalk subunits to proton translocation. Subunits alpha and beta form the catalytic core in F(1). Rotation of the central stalk against the surrounding alpha(3)beta(3) subunits leads to hydrolysis of ATP in three separate catalytic sites on the beta subunits. Subunit alpha does not bear the catalytic high-affinity ATP-binding sites. Contrary to the procyclic, insect form that requires F(1)F(o) ATP synthase for ATP synthesis, the bloodstream form relies on ATP hydrolysis by F(1)F(o) ATP synthase to maintain its mitochondrial membrane potential. This Trypanosoma brucei brucei protein is ATP synthase subunit alpha, mitochondrial.